A 493-amino-acid chain; its full sequence is Probable cytosol aminopeptidase (493 aa).

K258 and D263 together coordinate Mn(2+). K270 is a catalytic residue. Mn(2+) contacts are provided by D281, D340, and E342. R344 is a catalytic residue.

This sequence belongs to the peptidase M17 family. Mn(2+) serves as cofactor.

It is found in the cytoplasm. It catalyses the reaction Release of an N-terminal amino acid, Xaa-|-Yaa-, in which Xaa is preferably Leu, but may be other amino acids including Pro although not Arg or Lys, and Yaa may be Pro. Amino acid amides and methyl esters are also readily hydrolyzed, but rates on arylamides are exceedingly low.. The enzyme catalyses Release of an N-terminal amino acid, preferentially leucine, but not glutamic or aspartic acids.. Its function is as follows. Presumably involved in the processing and regular turnover of intracellular proteins. Catalyzes the removal of unsubstituted N-terminal amino acids from various peptides. This chain is Probable cytosol aminopeptidase, found in Caulobacter vibrioides (strain ATCC 19089 / CIP 103742 / CB 15) (Caulobacter crescentus).